The sequence spans 534 residues: CTP synthase (534 aa).

The tract at residues 1–267 (MSKYIVVTGG…GSYILNRLNI (267 aa)) is amidoligase domain. Ser13 is a CTP binding site. Position 13 (Ser13) interacts with UTP. 14–19 (SIGKGI) provides a ligand contact to ATP. Tyr54 is a binding site for L-glutamine. Asp71 contributes to the ATP binding site. Mg(2+)-binding residues include Asp71 and Glu141. CTP-binding positions include 148–150 (DIE), 188–193 (KTKPTQ), and Lys224. Residues 188 to 193 (KTKPTQ) and Lys224 each bind UTP. The Glutamine amidotransferase type-1 domain occupies 294 to 532 (KIAVVGKYIE…IKAAKNKKQN (239 aa)). Gly353 is an L-glutamine binding site. Cys380 (nucleophile; for glutamine hydrolysis) is an active-site residue. L-glutamine is bound by residues 381-384 (LGLH), Glu403, and Arg460. Catalysis depends on residues His505 and Glu507.

This sequence belongs to the CTP synthase family. In terms of assembly, homotetramer.

It catalyses the reaction UTP + L-glutamine + ATP + H2O = CTP + L-glutamate + ADP + phosphate + 2 H(+). It carries out the reaction L-glutamine + H2O = L-glutamate + NH4(+). The catalysed reaction is UTP + NH4(+) + ATP = CTP + ADP + phosphate + 2 H(+). The protein operates within pyrimidine metabolism; CTP biosynthesis via de novo pathway; CTP from UDP: step 2/2. Its activity is regulated as follows. Allosterically activated by GTP, when glutamine is the substrate; GTP has no effect on the reaction when ammonia is the substrate. The allosteric effector GTP functions by stabilizing the protein conformation that binds the tetrahedral intermediate(s) formed during glutamine hydrolysis. Inhibited by the product CTP, via allosteric rather than competitive inhibition. Functionally, catalyzes the ATP-dependent amination of UTP to CTP with either L-glutamine or ammonia as the source of nitrogen. Regulates intracellular CTP levels through interactions with the four ribonucleotide triphosphates. In Methanosphaera stadtmanae (strain ATCC 43021 / DSM 3091 / JCM 11832 / MCB-3), this protein is CTP synthase.